Reading from the N-terminus, the 162-residue chain is Large ribosomal subunit protein uL10 (162 aa).

This sequence belongs to the universal ribosomal protein uL10 family. Part of the ribosomal stalk of the 50S ribosomal subunit. The N-terminus interacts with L11 and the large rRNA to form the base of the stalk. The C-terminus forms an elongated spine to which L12 dimers bind in a sequential fashion forming a multimeric L10(L12)X complex.

Forms part of the ribosomal stalk, playing a central role in the interaction of the ribosome with GTP-bound translation factors. The polypeptide is Large ribosomal subunit protein uL10 (rplJ) (Mycoplasma genitalium (strain ATCC 33530 / DSM 19775 / NCTC 10195 / G37) (Mycoplasmoides genitalium)).